A 141-amino-acid polypeptide reads, in one-letter code: VLSAADKNNVKGIFTKIAGHAEEYGAEALERMFITYPSTKTYFPHFDLSHGSAQIKGHGKKVVAALIEAVNHIDDITGTLSKLSDLHAHKLRVDPVNFKLLGQCFLVVVAIHHPSALTPEVHASLDKFLCAVGTVLTAKYR.

The Globin domain occupies 1–141 (VLSAADKNNV…VGTVLTAKYR (141 aa)). Histidine 58 provides a ligand contact to O2. Histidine 87 lines the heme b pocket.

Belongs to the globin family. In terms of assembly, heterotetramer of two alpha chains and two beta chains. Red blood cells.

Involved in oxygen transport from the lung to the various peripheral tissues. The protein is Hemoglobin subunit alpha-A (HBAA) of Phasianus colchicus colchicus (Black-necked pheasant).